A 213-amino-acid chain; its full sequence is Thiamine-phosphate synthase (213 aa).

4-amino-2-methyl-5-(diphosphooxymethyl)pyrimidine contacts are provided by residues 40 to 44 and N75; that span reads QFREK. Mg(2+) is bound by residues D76 and D95. S113 contacts 4-amino-2-methyl-5-(diphosphooxymethyl)pyrimidine. 139–141 is a 2-[(2R,5Z)-2-carboxy-4-methylthiazol-5(2H)-ylidene]ethyl phosphate binding site; it reads TPS. 4-amino-2-methyl-5-(diphosphooxymethyl)pyrimidine is bound at residue K142. 2-[(2R,5Z)-2-carboxy-4-methylthiazol-5(2H)-ylidene]ethyl phosphate is bound by residues G171 and 191–192; that span reads IS.

It belongs to the thiamine-phosphate synthase family. Mg(2+) serves as cofactor.

It carries out the reaction 2-[(2R,5Z)-2-carboxy-4-methylthiazol-5(2H)-ylidene]ethyl phosphate + 4-amino-2-methyl-5-(diphosphooxymethyl)pyrimidine + 2 H(+) = thiamine phosphate + CO2 + diphosphate. The enzyme catalyses 2-(2-carboxy-4-methylthiazol-5-yl)ethyl phosphate + 4-amino-2-methyl-5-(diphosphooxymethyl)pyrimidine + 2 H(+) = thiamine phosphate + CO2 + diphosphate. It catalyses the reaction 4-methyl-5-(2-phosphooxyethyl)-thiazole + 4-amino-2-methyl-5-(diphosphooxymethyl)pyrimidine + H(+) = thiamine phosphate + diphosphate. The protein operates within cofactor biosynthesis; thiamine diphosphate biosynthesis; thiamine phosphate from 4-amino-2-methyl-5-diphosphomethylpyrimidine and 4-methyl-5-(2-phosphoethyl)-thiazole: step 1/1. Condenses 4-methyl-5-(beta-hydroxyethyl)thiazole monophosphate (THZ-P) and 2-methyl-4-amino-5-hydroxymethyl pyrimidine pyrophosphate (HMP-PP) to form thiamine monophosphate (TMP). The sequence is that of Thiamine-phosphate synthase from Staphylococcus aureus (strain MSSA476).